We begin with the raw amino-acid sequence, 419 residues long: NF-kappa-B essential modulator (419 aa).

The tract at residues 1-48 (MSRPPWKSPLCEMVQPSGSPAGDQDMLGEESSLGKPAMLHVPSEQGTP) is disordered. The interval 1-197 (MSRPPWKSPL…REALEQRHSV (197 aa)) is required for interaction with and ubiquitination by MARCHF2. Ser31 and Ser43 each carry phosphoserine; by IKKB. The segment at 44–111 (EQGTPETFQR…DLVVRLSLEK (68 aa)) is interaction with CHUK/IKBKB. Residues 49-353 (ETFQRCLEEN…KTSCQESARI (305 aa)) are a coiled coil. The residue at position 68 (Ser68) is a Phosphoserine. Residues Lys111, Lys139, Lys143, Lys226, Lys246, and Lys264 each participate in a glycyl lysine isopeptide (Lys-Gly) (interchain with G-Cter in ubiquitin) cross-link. Residues 150 to 257 (LGELQESQSR…SMVSSERNRG (108 aa)) are interaction with TANK. The interval 242 to 350 (DNHMKSSMVS…SRLKTSCQES (109 aa)) is ubiquitin-binding (UBAN). A self-association region spans residues 246 to 365 (KSSMVSSERN…MRKRHVEVSQ (120 aa)). The tract at residues 251–419 (SSERNRGLQL…LQIHVMECIE (169 aa)) is required for interaction with TNFAIP3. Residue Lys277 forms a Glycyl lysine isopeptide (Lys-Gly) (interchain with G-Cter in SUMO); alternate linkage. Residue Lys277 forms a Glycyl lysine isopeptide (Lys-Gly) (interchain with G-Cter in ubiquitin); alternate linkage. Glycyl lysine isopeptide (Lys-Gly) (interchain with G-Cter in ubiquitin) cross-links involve residues Lys283, Lys285, Lys292, and Lys302. Lys309 participates in a covalent cross-link: Glycyl lysine isopeptide (Lys-Gly) (interchain with G-Cter in SUMO); alternate. A Glycyl lysine isopeptide (Lys-Gly) (interchain with G-Cter in ubiquitin); alternate cross-link involves residue Lys309. Residues Lys321, Lys325, and Lys326 each participate in a glycyl lysine isopeptide (Lys-Gly) (interchain with G-Cter in ubiquitin) cross-link. Residues 322 to 343 (LAEKKEFLQEQLEQLQREYSRL) form a leucine-zipper region. Residues 356–394 (MRKRHVEVSQPPLAPGPAHHSFHLNPSSQRRSPPDEPPK) form a disordered region. Ser376 carries the post-translational modification Phosphoserine; by IKKB. Positions 382–419 (SSQRRSPPDEPPKFCCPKCQYQAPDIDTLQIHVMECIE) are interaction with CYLD. At Ser387 the chain carries Phosphoserine. The CCHC NOA-type zinc finger occupies 389–419 (PDEPPKFCCPKCQYQAPDIDTLQIHVMECIE). Cys397 is a binding site for Zn(2+). Lys399 is covalently cross-linked (Glycyl lysine isopeptide (Lys-Gly) (interchain with G-Cter in ubiquitin)). 3 residues coordinate Zn(2+): Cys400, His413, and Cys417.

As to quaternary structure, homodimer; disulfide-linked. Component of the I-kappa-B-kinase (IKK) core complex consisting of CHUK, IKBKB and IKBKG; probably four alpha/CHUK-beta/IKBKB dimers are associated with four gamma/IKBKG subunits. The IKK core complex seems to associate with regulatory or adapter proteins to form a IKK-signalosome holo-complex. The IKK complex associates with TERF2IP/RAP1, leading to promote IKK-mediated phosphorylation of RELA/p65. Part of a complex composed of NCOA2, NCOA3, CHUK/IKKA, IKBKB, IKBKG and CREBBP. Interacts with COPS3, CYLD, NALP2, TRPC4AP and PIDD1. Interacts with ATM; the complex is exported from the nucleus. Interacts with TRAF6. Interacts with IKBKE. Interacts with TANK; the interaction is enhanced by IKBKE and TBK1. Part of a ternary complex consisting of TANK, IKBKB and IKBKG. Interacts with ZFAND5. Interacts with RIPK2. Interacts with TNIP1 and TNFAIP3; TNIP1 facilitates the TNFAIP3-mediated de-ubiquitination of IKBKG. Interacts with TNFAIP3; the interaction is induced by TNF stimulation and by polyubiquitin. Binds (via UBAN region) polyubiquitin; binds both 'Lys-63'-linked and linear polyubiquitin, with higher affinity for linear ubiquitin. Interacts with NLRP10. Interacts with TANK; this interaction increases in response to DNA damage. Interacts with USP10; this interaction increases in response to DNA damage. Interacts with ZC3H12A; this interaction increases in response to DNA damage. Interacts with IFIT5; the interaction synergizes the recruitment of IKK to MAP3K7 and enhances IKK phosphorylation. Interacts with TRIM29; this interaction induces IKBKG/NEMO ubiquitination and proteolytic degradation. Interacts with TRIM13; this interaction leads to IKBKG/NEMO ubiquitination. Interacts with ARFIP2. Interacts with RIPK1. Interacts with (ubiquitinated) BCL10; interaction with polyubiquitinated BCL10 via both 'Lys-63'-linked and linear ubiquitin is required for TCR-induced NF-kappa-B activation. Interacts with MARCHF2; during the late stages of macrophage viral and bacterial infection; the interaction leads to ubiquitination and degradation of IKBKG/NEMO. Post-translationally, phosphorylation at Ser-68 attenuates aminoterminal homodimerization. Polyubiquitinated on Lys-285 through 'Lys-63'; the ubiquitination is mediated downstream of NOD2 and RIPK2 and probably plays a role in signaling by facilitating interactions with ubiquitin domain-containing proteins and activates the NF-kappa-B pathway. Polyubiquitinated on Lys-399 through 'Lys-63'; the ubiquitination is mediated by BCL10, MALT1 and TRAF6 and probably plays a role in signaling by facilitating interactions with ubiquitin domain-containing proteins and activates the NF-kappa-B pathway. Monoubiquitinated on Lys-277 and Lys-309; promotes nuclear export. Polyubiquitinated through 'Lys-27' by TRIM23; involved in antiviral innate and inflammatory responses. Linear polyubiquitinated on Lys-111, Lys-143, Lys-226, Lys-246, Lys-264, Lys-277, Lys-285, Lys-292, Lys-302, Lys-309 and Lys-326; the head-to-tail polyubiquitination is mediated by the LUBAC complex and plays a key role in NF-kappa-B activation. Deubiquitinated by USP10 in a TANK-dependent and -independent manner, leading to the negative regulation of NF-kappa-B signaling upon DNA damage. Ubiquitinated at Lys-326 by MARCHF2 following bacterial and viral infection which leads to its degradation. Polyubiquitinated via 'Lys-29'-linked ubiquitin; leading to lysosomal degradation. In terms of processing, sumoylated on Lys-277 and Lys-309 with SUMO1. Post-translationally, neddylated by TRIM40, resulting in stabilization of NFKBIA and down-regulation of NF-kappa-B activity.

It is found in the cytoplasm. Its subcellular location is the nucleus. Functionally, regulatory subunit of the IKK core complex which phosphorylates inhibitors of NF-kappa-B thus leading to the dissociation of the inhibitor/NF-kappa-B complex and ultimately the degradation of the inhibitor. Its binding to scaffolding polyubiquitin plays a key role in IKK activation by multiple signaling receptor pathways. Can recognize and bind both 'Lys-63'-linked and linear polyubiquitin upon cell stimulation, with a much highr affinity for linear polyubiquitin. Could be implicated in NF-kappa-B-mediated protection from cytokine toxicity. Essential for viral activation of IRF3. Involved in TLR3- and IFIH1-mediated antiviral innate response; this function requires 'Lys-27'-linked polyubiquitination. In Bos taurus (Bovine), this protein is NF-kappa-B essential modulator (IKBKG).